Here is a 213-residue protein sequence, read N- to C-terminus: ATP-dependent Clp protease proteolytic subunit (213 aa).

Residue S114 is the Nucleophile of the active site. H139 is an active-site residue.

The protein belongs to the peptidase S14 family. Fourteen ClpP subunits assemble into 2 heptameric rings which stack back to back to give a disk-like structure with a central cavity, resembling the structure of eukaryotic proteasomes.

The protein localises to the cytoplasm. The catalysed reaction is Hydrolysis of proteins to small peptides in the presence of ATP and magnesium. alpha-casein is the usual test substrate. In the absence of ATP, only oligopeptides shorter than five residues are hydrolyzed (such as succinyl-Leu-Tyr-|-NHMec, and Leu-Tyr-Leu-|-Tyr-Trp, in which cleavage of the -Tyr-|-Leu- and -Tyr-|-Trp bonds also occurs).. Functionally, cleaves peptides in various proteins in a process that requires ATP hydrolysis. Has a chymotrypsin-like activity. Plays a major role in the degradation of misfolded proteins. In Ectopseudomonas mendocina (strain ymp) (Pseudomonas mendocina), this protein is ATP-dependent Clp protease proteolytic subunit.